Here is a 323-residue protein sequence, read N- to C-terminus: MDITEKLRLITRNAEEVVTEEELRQLIETKEKPRAYVGYEPSGEIHLGHMMTVQKLMDLQEAGFEIIVLLADIHAYLNEKGTFEEIAEVADYNKKVFIALGLDESRAKFVLGSEYQLSRDYVLDVLKMARITTLNRARRSMDEVSRRKEDPMVSQMIYPLMQALDIAHLGVDLAVGGIDQRKIHMLARENLPRLGYSSPVCLHTPILVGLDGQKMSSSKGNYISVRDPPEEVERKIRKAYCPAGVVEENPILDIAKYHILPRFGKIVVERDAKFGGDVEYASFEELAEDFKSGQLHPLDLKIAVAKYLNMLLEDARKRLGVSV.

Position 36 (tyrosine 36) interacts with L-tyrosine. The 'HIGH' region signature appears at 41–49 (PSGEIHLGH). 4 residues coordinate L-tyrosine: tyrosine 158, glutamine 162, aspartate 165, and glutamine 180. The 'KMSKS' region motif lies at 214 to 218 (KMSSS). Position 217 (serine 217) interacts with ATP.

It belongs to the class-I aminoacyl-tRNA synthetase family. TyrS type 3 subfamily. As to quaternary structure, homodimer.

It is found in the cytoplasm. It catalyses the reaction tRNA(Tyr) + L-tyrosine + ATP = L-tyrosyl-tRNA(Tyr) + AMP + diphosphate + H(+). In terms of biological role, catalyzes the attachment of tyrosine to tRNA(Tyr) in a two-step reaction: tyrosine is first activated by ATP to form Tyr-AMP and then transferred to the acceptor end of tRNA(Tyr). The sequence is that of Tyrosine--tRNA ligase from Archaeoglobus fulgidus (strain ATCC 49558 / DSM 4304 / JCM 9628 / NBRC 100126 / VC-16).